Reading from the N-terminus, the 312-residue chain is Protein phosphatase PTC7 homolog fig (312 aa).

A PPM-type phosphatase domain is found at 42–306 (IQGSSKDQLA…DDITVILASV (265 aa)). 3 residues coordinate Mn(2+): D83, G84, and D228.

The protein belongs to the PP2C family. Requires Mg(2+) as cofactor. Mn(2+) is required as a cofactor.

The enzyme catalyses O-phospho-L-seryl-[protein] + H2O = L-seryl-[protein] + phosphate. It catalyses the reaction O-phospho-L-threonyl-[protein] + H2O = L-threonyl-[protein] + phosphate. This chain is Protein phosphatase PTC7 homolog fig, found in Drosophila mojavensis (Fruit fly).